The chain runs to 272 residues: Tryptophan synthase alpha chain (272 aa).

Catalysis depends on proton acceptor residues glutamate 49 and aspartate 60.

This sequence belongs to the TrpA family. Tetramer of two alpha and two beta chains.

It carries out the reaction (1S,2R)-1-C-(indol-3-yl)glycerol 3-phosphate + L-serine = D-glyceraldehyde 3-phosphate + L-tryptophan + H2O. It participates in amino-acid biosynthesis; L-tryptophan biosynthesis; L-tryptophan from chorismate: step 5/5. The alpha subunit is responsible for the aldol cleavage of indoleglycerol phosphate to indole and glyceraldehyde 3-phosphate. The chain is Tryptophan synthase alpha chain from Polaromonas sp. (strain JS666 / ATCC BAA-500).